A 95-amino-acid chain; its full sequence is Citrate lyase acyl carrier protein (95 aa).

Ser14 bears the O-(phosphoribosyl dephospho-coenzyme A)serine mark.

The protein belongs to the CitD family. As to quaternary structure, oligomer with a subunit composition of (alpha,beta,gamma)6.

It is found in the cytoplasm. Its function is as follows. Covalent carrier of the coenzyme of citrate lyase. The chain is Citrate lyase acyl carrier protein from Haemophilus influenzae (strain 86-028NP).